The sequence spans 434 residues: Serine hydroxymethyltransferase (434 aa).

(6S)-5,6,7,8-tetrahydrofolate-binding positions include L133 and 137–139 (GHL). An N6-(pyridoxal phosphate)lysine modification is found at K242. 366–368 (SPF) lines the (6S)-5,6,7,8-tetrahydrofolate pocket.

It belongs to the SHMT family. As to quaternary structure, homodimer. Requires pyridoxal 5'-phosphate as cofactor.

Its subcellular location is the cytoplasm. The catalysed reaction is (6R)-5,10-methylene-5,6,7,8-tetrahydrofolate + glycine + H2O = (6S)-5,6,7,8-tetrahydrofolate + L-serine. Its pathway is one-carbon metabolism; tetrahydrofolate interconversion. The protein operates within amino-acid biosynthesis; glycine biosynthesis; glycine from L-serine: step 1/1. Catalyzes the reversible interconversion of serine and glycine with tetrahydrofolate (THF) serving as the one-carbon carrier. This reaction serves as the major source of one-carbon groups required for the biosynthesis of purines, thymidylate, methionine, and other important biomolecules. Also exhibits THF-independent aldolase activity toward beta-hydroxyamino acids, producing glycine and aldehydes, via a retro-aldol mechanism. This is Serine hydroxymethyltransferase from Erythrobacter litoralis (strain HTCC2594).